The primary structure comprises 669 residues: Trissin receptor (669 aa).

A compositionally biased stretch (polar residues) spans 1 to 15 (MIMTMMQTVRAWQQE). Positions 1–90 (MIMTMMQTVR…PTGQQPPRLP (90 aa)) are disordered. Topologically, residues 1 to 184 (MIMTMMQTVR…EYIFDRTDVR (184 aa)) are extracellular. Over residues 55–74 (NQNNGSPNSSPNQSTSAFRQ) the composition is skewed to low complexity. Asn66 carries an N-linked (GlcNAc...) asparagine glycan. A compositionally biased stretch (pro residues) spans 79–89 (HPPTGQQPPRL). N-linked (GlcNAc...) asparagine glycosylation is found at Asn120 and Asn130. A helical transmembrane segment spans residues 185-205 (IIFITLYTLVFCCCFFGNLLV). Residues 206–217 (ILVVTLSRRLRS) are Cytoplasmic-facing. The chain crosses the membrane as a helical span at residues 218-238 (ITNFFLANLAFADFCVGLFCV). Residues 239–269 (MQNLSIYLIESWVFGEFLCRMYQFVHSLSYT) lie on the Extracellular side of the membrane. Residue Asn241 is glycosylated (N-linked (GlcNAc...) asparagine). A disulfide bond links Cys257 and Cys340. The helical transmembrane segment at 270–290 (ASIFILVVICMERYFAIVHPI) threads the bilayer. The Cytoplasmic portion of the chain corresponds to 291-302 (TCKQILTAARLR). A helical transmembrane segment spans residues 303–323 (MVIVTVWITSAVYSTPKFVFS). Over 324-350 (KTIKNIHTQDGQEEEICVLDREMFNSK) the chain is Extracellular. Residues 351-371 (LLDMINFVLLYVMPLLVMTVL) form a helical membrane-spanning segment. The Cytoplasmic segment spans residues 372–552 (YSKIAIALWR…SSNVLRARRG (181 aa)). Residues 390-401 (VVQHQHQQPQQP) are compositionally biased toward low complexity. Disordered regions lie at residues 390–481 (VVQH…RGVS) and 515–537 (AHHQ…AGAT). Residues 414–429 (MYHHHPHHHHHHHQHH) show a composition bias toward basic residues. A compositionally biased stretch (gly residues) spans 441 to 454 (VGVGLGGGGGGGPG). Residues 455–470 (PSLASGGSSTTSLSRK) show a composition bias toward low complexity. Positions 524-534 (SVGGGSGGAGA) are enriched in gly residues. A helical transmembrane segment spans residues 553–573 (VVRMLIIFVLTFALCNLPYHA). Topologically, residues 574 to 595 (RKMWQYWSRSYRGDSNFNALLT) are extracellular. The helical transmembrane segment at 596–616 (PLTFLVTYFNSGVNPLLYAFL) threads the bilayer. At 617-669 (SRNFRKGMKELLLCSWKKGKGKSSSNSSMHHKRKALQTHSLPTDTTHIGNEQL) the chain is on the cytoplasmic side. Positions 635-669 (GKGKSSSNSSMHHKRKALQTHSLPTDTTHIGNEQL) are disordered. The segment covering 653-669 (QTHSLPTDTTHIGNEQL) has biased composition (polar residues).

This sequence belongs to the G-protein coupled receptor 1 family.

Its subcellular location is the cell membrane. Functionally, G-protein coupled receptor which is activated by the Trissin peptide in vitro, leading to increased intracellular calcium ion levels. This chain is Trissin receptor, found in Drosophila melanogaster (Fruit fly).